We begin with the raw amino-acid sequence, 331 residues long: tRNA N6-adenosine threonylcarbamoyltransferase (331 aa).

His109, His113, and Tyr130 together coordinate Fe cation. Substrate is bound by residues 130 to 134, Asp162, Asp183, and Ser262; that span reads YLSGG. A Fe cation-binding site is contributed by Asp290.

This sequence belongs to the KAE1 / TsaD family. Fe(2+) is required as a cofactor.

It localises to the cytoplasm. It carries out the reaction L-threonylcarbamoyladenylate + adenosine(37) in tRNA = N(6)-L-threonylcarbamoyladenosine(37) in tRNA + AMP + H(+). Its function is as follows. Required for the formation of a threonylcarbamoyl group on adenosine at position 37 (t(6)A37) in tRNAs that read codons beginning with adenine. Is probably involved in the transfer of the threonylcarbamoyl moiety of threonylcarbamoyl-AMP (TC-AMP) to the N6 group of A37. The sequence is that of tRNA N6-adenosine threonylcarbamoyltransferase from Metallosphaera sedula (strain ATCC 51363 / DSM 5348 / JCM 9185 / NBRC 15509 / TH2).